Reading from the N-terminus, the 109-residue chain is Iron-sulfur cluster assembly protein CyaY (109 aa).

The protein belongs to the frataxin family.

In terms of biological role, involved in iron-sulfur (Fe-S) cluster assembly. May act as a regulator of Fe-S biogenesis. The chain is Iron-sulfur cluster assembly protein CyaY from Bordetella pertussis (strain Tohama I / ATCC BAA-589 / NCTC 13251).